Reading from the N-terminus, the 593-residue chain is DNA mismatch repair protein MutL (593 aa).

It belongs to the DNA mismatch repair MutL/HexB family.

This protein is involved in the repair of mismatches in DNA. It is required for dam-dependent methyl-directed DNA mismatch repair. May act as a 'molecular matchmaker', a protein that promotes the formation of a stable complex between two or more DNA-binding proteins in an ATP-dependent manner without itself being part of a final effector complex. This is DNA mismatch repair protein MutL from Leptospira interrogans serogroup Icterohaemorrhagiae serovar copenhageni (strain Fiocruz L1-130).